Consider the following 275-residue polypeptide: Light-independent protochlorophyllide reductase iron-sulfur ATP-binding protein (275 aa).

Residues 10–15 (GIGKST) and Lys39 contribute to the ATP site. Ser14 contributes to the Mg(2+) binding site. [4Fe-4S] cluster is bound by residues Cys95 and Cys129. ATP is bound at residue 180 to 181 (NR).

Belongs to the NifH/BchL/ChlL family. Homodimer. Protochlorophyllide reductase is composed of three subunits; ChlL, ChlN and ChlB. [4Fe-4S] cluster serves as cofactor.

The catalysed reaction is chlorophyllide a + oxidized 2[4Fe-4S]-[ferredoxin] + 2 ADP + 2 phosphate = protochlorophyllide a + reduced 2[4Fe-4S]-[ferredoxin] + 2 ATP + 2 H2O. The protein operates within porphyrin-containing compound metabolism; chlorophyll biosynthesis (light-independent). Its function is as follows. Component of the dark-operative protochlorophyllide reductase (DPOR) that uses Mg-ATP and reduced ferredoxin to reduce ring D of protochlorophyllide (Pchlide) to form chlorophyllide a (Chlide). This reaction is light-independent. The L component serves as a unique electron donor to the NB-component of the complex, and binds Mg-ATP. This is Light-independent protochlorophyllide reductase iron-sulfur ATP-binding protein from Gloeobacter violaceus (strain ATCC 29082 / PCC 7421).